We begin with the raw amino-acid sequence, 608 residues long: Albumin 2 (608 aa).

The first 14 residues, 1–14 (MQWLSVCSLLVLLS), serve as a signal peptide directing secretion. Residues 15 to 18 (VLSR) constitute a propeptide that is removed on maturation. Albumin domains are found at residues 19-205 (SQAQ…TFQH), 206-398 (AIAK…AGSD), and 402-600 (KITD…KLVS). 18 cysteine pairs are disulfide-bonded: C26/C72, C71/C80, C93/C108, C107/C118, C142/C187, C186/C195, C218/C264, C263/C271, C283/C299, C298/C309, C336/C381, C380/C389, C414/C460, C459/C471, C484/C500, C499/C510, C537/C582, and C581/C590. N501 carries an N-linked (GlcNAc...) asparagine glycan.

Belongs to the ALB/AFP/VDB family. Plasma.

It is found in the secreted. Binds water, Ca(2+), Na(+), K(+), fatty acids, hormones, bilirubin and drugs. Its main function is the regulation of the colloidal osmotic pressure of blood. The sequence is that of Albumin 2 (alb2) from Salmo salar (Atlantic salmon).